A 354-amino-acid polypeptide reads, in one-letter code: Eukaryotic translation initiation factor 3 subunit H (354 aa).

A disordered region spans residues 1–28 (MATRQPYQKKFQSRDQREQTSSQQAPNS). Polar residues predominate over residues 19 to 28 (QTSSQQAPNS). The MPN domain maps to 33–174 (VTVDALVVMK…LSAFRLSNKA (142 aa)).

The protein belongs to the eIF-3 subunit H family. As to quaternary structure, component of the eukaryotic translation initiation factor 3 (eIF-3) complex.

Its subcellular location is the cytoplasm. Functionally, component of the eukaryotic translation initiation factor 3 (eIF-3) complex, which is involved in protein synthesis of a specialized repertoire of mRNAs and, together with other initiation factors, stimulates binding of mRNA and methionyl-tRNAi to the 40S ribosome. The eIF-3 complex specifically targets and initiates translation of a subset of mRNAs involved in cell proliferation. In Monosiga brevicollis (Choanoflagellate), this protein is Eukaryotic translation initiation factor 3 subunit H.